Reading from the N-terminus, the 656-residue chain is MDETENNTSIDSVEVGPSSPRVVATPRIPIPVMMRETPLSTKRERQALTPRFRRPAPRMIKTVPQTRSIWSVRKDTTPQLVTPHGPQELESPHYDRANTQTFFEQVFQIDEIIGRGSFGEVFAARCREDSRLYAVKVSIAPMRQHSMSKYREAESHMIIPPHKNLVKFYRAWEETDRLYIQTELCEQSLQQYCSVQHALPENEIWNIFVDLLEAVHHLHSNDMIHDDIKPENIFLTKHKICKLGDFGLVINLKNPNDVKSAEEGDSKYLAPEVLNGKPTFASDIFSLGVTILEAATDLDVPSNGDAWHQIRNGQIPERFFVGISSDLRVLIEQMINKEPMKRPTSDALRKHLSIRTRLDSRRRYILSMDMRDGFCNLMSSILVWCMAFLSVVFHPVTRFHEAINNRRSELCAQFVNNQQHTPIQTPETSKVYSESLTGVALRQASQISPFDFSDDENPPHSQRRLFTGPVSRRLNFDDEMEDEEQATCSSSNSSAIETAEDSLSSPKKPVIPVTRQGTPKSARRLIPSYRNRSGSRDPTHHAGAGDSMNSSILDQERTDRYLRMRLAEQQLDWNDHSNMIDEAPPPMSCPPRIRRSLRDMPRMPVLNFNLLDEPIKKGKEKPVVEPAELRQRPMRNGLKSLRSRMASFQGSSGDEN.

The span at 1 to 11 (MDETENNTSID) shows a compositional bias: polar residues. Residues 1–24 (MDETENNTSIDSVEVGPSSPRVVA) are disordered. The 248-residue stretch at 107–354 (FQIDEIIGRG…SDALRKHLSI (248 aa)) folds into the Protein kinase domain. Residues 113–121 (IGRGSFGEV) and K136 contribute to the ATP site. The active-site Proton acceptor is the D227. Residues N232 and D245 each contribute to the Mg(2+) site. Disordered stretches follow at residues 449-552 (PFDF…NSSI) and 617-656 (KGKE…GDEN). Residues 486-505 (ATCSSSNSSAIETAEDSLSS) show a composition bias toward polar residues. Residues 617–631 (KGKEKPVVEPAELRQ) show a composition bias toward basic and acidic residues. The span at 646–656 (ASFQGSSGDEN) shows a compositional bias: polar residues.

Belongs to the protein kinase superfamily. Ser/Thr protein kinase family. WEE1 subfamily.

It is found in the golgi apparatus membrane. It localises to the cytoplasm. The enzyme catalyses L-seryl-[protein] + ATP = O-phospho-L-seryl-[protein] + ADP + H(+). The catalysed reaction is L-threonyl-[protein] + ATP = O-phospho-L-threonyl-[protein] + ADP + H(+). Acts as a negative regulator of entry into mitosis (G2 to M transition) by phosphorylation of the CDK1 kinase during oocyte maturation. Required for embryonic development, germline proliferation and initiation of meiosis during spermatogenesis. Required for chromosome structure during mitosis and negative regulation of nuclear envelope breakdown. The chain is Membrane-associated tyrosine- and threonine-specific cdc2-inhibitory kinase wee-1.3 from Caenorhabditis briggsae.